Reading from the N-terminus, the 838-residue chain is Translation initiation factor IF-2 (838 aa).

Disordered regions lie at residues 30–60 (PHTA…KVEE) and 94–254 (QRSP…PTGP). 2 stretches are compositionally biased toward basic and acidic residues: residues 33–43 (AAEEHVSDSEK) and 96–136 (SPEE…EARR). Residues 137 to 173 (QPAPVAEPVAAQAAAPAPAPVVEPVQEAPVATAAPAA) are compositionally biased toward low complexity. Basic and acidic residues-rich tracts occupy residues 174 to 214 (DARK…EKAP) and 222 to 231 (TTDEESDGFR). The span at 232 to 245 (RGGRGKAKLKKRNA) shows a compositional bias: basic residues. Residues 338-507 (ARAPVVTVMG…LLQAEVLELK (170 aa)) enclose the tr-type G domain. Residues 347–354 (GHVDHGKT) form a G1 region. Position 347-354 (347-354 (GHVDHGKT)) interacts with GTP. The segment at 372–376 (GITQH) is G2. Residues 393 to 396 (DTPG) form a G3 region. GTP-binding positions include 393–397 (DTPGH) and 447–450 (NKID). The segment at 447 to 450 (NKID) is G4. Positions 483 to 485 (SAK) are G5.

The protein belongs to the TRAFAC class translation factor GTPase superfamily. Classic translation factor GTPase family. IF-2 subfamily.

The protein resides in the cytoplasm. In terms of biological role, one of the essential components for the initiation of protein synthesis. Protects formylmethionyl-tRNA from spontaneous hydrolysis and promotes its binding to the 30S ribosomal subunits. Also involved in the hydrolysis of GTP during the formation of the 70S ribosomal complex. In Pseudomonas fluorescens (strain ATCC BAA-477 / NRRL B-23932 / Pf-5), this protein is Translation initiation factor IF-2.